A 572-amino-acid polypeptide reads, in one-letter code: MSDLREINRLNKDEEFEYFKLYSNSNGFRKWNLDEHNIFSKASLEYNFLKPDQMIEILKLVNQHNSNTSCKARTLEELNIHIKVYQNFLNKQQALRSPTTGSLNISGFGNPITSGGGGLGVLGGGGGGGGISSSSLGGLSGSGLFLNTMVNNTFQTILDSLDGNSSNNNNNNIPSTSSVKDVVSIGINPLFQKSVQSQSQLPTATNNNNKQPLELISKPIPTATATATTTATTTTTTIQPPIGGTKNTVNKEIEQDSNDNDNNNNTNNNNNNNNNNNNNNNNEEKEKQYLNYINNSLGELNKKDLKLLNEPWTVEDQKKLEDALTKYPPSRFSSVSRWQMVSKELGISPKAVALRYNQMLNQLIPKKPSLQQQQQQQQQQQQQPTTTTTTTTKPEQSIKSEEEEQTTGKRKSRSSFSSPSSSSKESPNKKEKTTHDTTTTTNTATTTTVTPNMTTPSIINSSPAIAANLLEADSLLQKNNQLLKQIRTSVMQLTDPQSTILTEVIENINNSIQLTGKWKDNIEMPPLPLKVNDLILSLISNNTSSSFKKPLSKKVTEWNLVVEDDAPTQDKK.

The segment covering 196 to 211 (QSQSQLPTATNNNNKQ) has biased composition (polar residues). Residues 196–283 (QSQSQLPTAT…NNNNNNNNNE (88 aa)) form a disordered region. Low complexity-rich tracts occupy residues 222–237 (TATA…TTTT) and 260–281 (NDNN…NNNN). The region spanning 311–360 (PWTVEDQKKLEDALTKYPPSRFSSVSRWQMVSKELGISPKAVALRYNQML) is the Myb-like domain. Positions 367–456 (KPSLQQQQQQ…TTVTPNMTTP (90 aa)) are disordered. 2 stretches are compositionally biased toward low complexity: residues 371 to 392 (QQQQ…TTTT) and 414 to 425 (SSFSSPSSSSKE). The segment covering 426-435 (SPNKKEKTTH) has biased composition (basic and acidic residues). Residues 436-455 (DTTTTTNTATTTTVTPNMTT) show a composition bias toward low complexity.

This is Myb-like protein Y (mybY) from Dictyostelium discoideum (Social amoeba).